Consider the following 350-residue polypeptide: uncharacterized protein (350 aa).

This is an uncharacterized protein from Methanocaldococcus jannaschii (strain ATCC 43067 / DSM 2661 / JAL-1 / JCM 10045 / NBRC 100440) (Methanococcus jannaschii).